The chain runs to 386 residues: Heavy metal-associated isoprenylated plant protein 5 (386 aa).

A compositionally biased stretch (basic and acidic residues) spans 1 to 16; the sequence is MGEVQEGPKVEQEKKP. A disordered region spans residues 1 to 40; that stretch reads MGEVQEGPKVEQEKKPAATVVPVETTDGKPKSGGGDSAAA. The 64-residue stretch at 49–112 folds into the HMA 1 domain; sequence VSAFVYKVDM…KLEEKTKRKV (64 aa). Positions 60 and 63 each coordinate a metal cation. The interval 129 to 153 is disordered; that stretch reads VGEKKADGGDKEAAPPAPAPAAPKE. The span at 130-141 shows a compositional bias: basic and acidic residues; that stretch reads GEKKADGGDKEA. An HMA 2 domain is found at 153-220; that stretch reads ESVVPLKIRL…KLKRTVEPLV (68 aa). 2 residues coordinate a metal cation: Cys-164 and Cys-167. 2 stretches are compositionally biased toward basic and acidic residues: residues 223 to 245 and 252 to 297; these read KKDD…KKEA and EAKK…KKDG. The segment at 223–301 is disordered; that stretch reads KKDDGAAENK…EKKKDGGGVP (79 aa). Cys-383 carries the post-translational modification Cysteine methyl ester. Residue Cys-383 is the site of S-farnesyl cysteine attachment. The propeptide at 384–386 is removed in mature form; sequence SVM.

It belongs to the HIPP family. Efficiently farnesylated in vitro.

Functionally, heavy-metal-binding protein. Involved in disease resistance. In Arabidopsis thaliana (Mouse-ear cress), this protein is Heavy metal-associated isoprenylated plant protein 5.